Here is a 402-residue protein sequence, read N- to C-terminus: Olfactomedin-like protein 1 (402 aa).

The first 28 residues, 1 to 28 (MMVALPGASASLVLFLAAFLPPLQHAQD), serve as a signal peptide directing secretion. N66 is a glycosylation site (N-linked (GlcNAc...) asparagine). A coiled-coil region spans residues 73 to 135 (RCQTHTNEYR…EAEEEKKIRT (63 aa)). N-linked (GlcNAc...) asparagine glycans are attached at residues N138 and N183. One can recognise an Olfactomedin-like domain in the interval 140 to 397 (SCDNMLMAIK…QIIYKLQTKK (258 aa)). The cysteines at positions 141 and 324 are disulfide-linked.

Post-translationally, highly N-glycosylated.

It is found in the secreted. In Rattus norvegicus (Rat), this protein is Olfactomedin-like protein 1 (Olfml1).